A 314-amino-acid chain; its full sequence is Putative S-adenosyl-L-methionine-dependent methyltransferase MRA_3805 (314 aa).

S-adenosyl-L-methionine is bound by residues Asp-132 and 161 to 162 (DL).

The protein belongs to the UPF0677 family.

Exhibits S-adenosyl-L-methionine-dependent methyltransferase activity. This chain is Putative S-adenosyl-L-methionine-dependent methyltransferase MRA_3805, found in Mycobacterium tuberculosis (strain ATCC 25177 / H37Ra).